The chain runs to 86 residues: Selenoprotein W (86 aa).

Positions C10 to U13 form a cross-link, cysteinyl-selenocysteine (Cys-Sec); redox-active. Position 13 (U13) is a non-standard amino acid, selenocysteine.

It belongs to the SelWTH family. Selenoprotein W subfamily.

Its subcellular location is the cytoplasm. Functionally, plays a role as a glutathione (GSH)-dependent antioxidant. May be involved in a redox-related process. May play a role in the myopathies of selenium deficiency. In Danio rerio (Zebrafish), this protein is Selenoprotein W.